A 229-amino-acid chain; its full sequence is uncharacterized protein (229 aa).

This is an uncharacterized protein from Borreliella burgdorferi (strain ATCC 35210 / DSM 4680 / CIP 102532 / B31) (Borrelia burgdorferi).